We begin with the raw amino-acid sequence, 95 residues long: Large ribosomal subunit protein bL28 (95 aa).

It belongs to the bacterial ribosomal protein bL28 family.

In Dinoroseobacter shibae (strain DSM 16493 / NCIMB 14021 / DFL 12), this protein is Large ribosomal subunit protein bL28.